The chain runs to 114 residues: MEKNPLAAPLLILWFHLDCVSSILNVEQSPQSLHVQEGDSTNFTCSFPSSNFYALHWYRWETAKSPEALFVMTLNGDEKKKGRISATLNTKEGYSYLYIKGSQPEDSATYLCAF.

The first 22 residues, 1–22, serve as a signal peptide directing secretion; the sequence is MEKNPLAAPLLILWFHLDCVSS. The 92-residue stretch at 23 to 114 folds into the Ig-like domain; the sequence is ILNVEQSPQS…EDSATYLCAF (92 aa). An N-linked (GlcNAc...) asparagine glycan is attached at Asn42. Residues Cys45 and Cys112 are joined by a disulfide bond.

Alpha-beta TR is a heterodimer composed of an alpha and beta chain; disulfide-linked. The alpha-beta TR is associated with the transmembrane signaling CD3 coreceptor proteins to form the TR-CD3 (TcR or TCR). The assembly of alpha-beta TR heterodimers with CD3 occurs in the endoplasmic reticulum where a single alpha-beta TR heterodimer associates with one CD3D-CD3E heterodimer, one CD3G-CD3E heterodimer and one CD247 homodimer forming a stable octameric structure. CD3D-CD3E and CD3G-CD3E heterodimers preferentially associate with TR alpha and TR beta chains, respectively. The association of the CD247 homodimer is the last step of TcR assembly in the endoplasmic reticulum and is required for transport to the cell surface.

The protein localises to the cell membrane. In terms of biological role, v region of the variable domain of T cell receptor (TR) alpha chain that participates in the antigen recognition. Alpha-beta T cell receptors are antigen specific receptors which are essential to the immune response and are present on the cell surface of T lymphocytes. Recognize peptide-major histocompatibility (MH) (pMH) complexes that are displayed by antigen presenting cells (APC), a prerequisite for efficient T cell adaptive immunity against pathogens. Binding of alpha-beta TR to pMH complex initiates TR-CD3 clustering on the cell surface and intracellular activation of LCK that phosphorylates the ITAM motifs of CD3G, CD3D, CD3E and CD247 enabling the recruitment of ZAP70. In turn ZAP70 phosphorylates LAT, which recruits numerous signaling molecules to form the LAT signalosome. The LAT signalosome propagates signal branching to three major signaling pathways, the calcium, the mitogen-activated protein kinase (MAPK) kinase and the nuclear factor NF-kappa-B (NF-kB) pathways, leading to the mobilization of transcription factors that are critical for gene expression and essential for T cell growth and differentiation. The T cell repertoire is generated in the thymus, by V-(D)-J rearrangement. This repertoire is then shaped by intrathymic selection events to generate a peripheral T cell pool of self-MH restricted, non-autoaggressive T cells. Post-thymic interaction of alpha-beta TR with the pMH complexes shapes TR structural and functional avidity. This is T cell receptor alpha variable 24 from Homo sapiens (Human).